A 127-amino-acid chain; its full sequence is Cytochrome c2 (127 aa).

Positions 1–20 (MRKLVFGLFVLAASVAPAAA) are cleaved as a signal peptide. Gln21 is modified (pyrrolidone carboxylic acid). 4 residues coordinate heme c: Cys33, Cys36, His37, and Met99.

It belongs to the cytochrome c family. Post-translationally, binds 1 heme c group covalently per subunit.

Functionally, cytochrome c2 is found mainly in purple, non-sulfur, photosynthetic bacteria where it functions as the electron donor to the oxidized bacteriochlorophyll in the photophosphorylation pathway. However, it may also have a role in the respiratory chain and is found in some non-photosynthetic bacteria. This chain is Cytochrome c2 (cycA), found in Blastochloris viridis (Rhodopseudomonas viridis).